We begin with the raw amino-acid sequence, 365 residues long: Inositol 4-methyltransferase (365 aa).

Residue Asp232 participates in S-adenosyl-L-methionine binding. His270 (proton acceptor) is an active-site residue.

This sequence belongs to the class I-like SAM-binding methyltransferase superfamily. Cation-independent O-methyltransferase family. In terms of tissue distribution, leaves and roots. The levels found in the leaves are 25 times greater than in the roots.

It carries out the reaction myo-inositol + S-adenosyl-L-methionine = 1D-4-O-methyl-myo-inositol + S-adenosyl-L-homocysteine + H(+). Its pathway is polyol metabolism; myo-inositol metabolism. Its function is as follows. Catalyzes the methylation of myo-inositol into ononitol (1D-4-O-methyl myo-inositol), the first step in the biosynthesis of the cyclic sugar pinitol which has osmoprotective properties. In Mesembryanthemum crystallinum (Common ice plant), this protein is Inositol 4-methyltransferase (IMT1).